We begin with the raw amino-acid sequence, 463 residues long: UDP-N-acetylmuramoylalanine--D-glutamate ligase (463 aa).

Residue 109–115 participates in ATP binding; that stretch reads GTDGKST.

This sequence belongs to the MurCDEF family.

The protein localises to the cytoplasm. The enzyme catalyses UDP-N-acetyl-alpha-D-muramoyl-L-alanine + D-glutamate + ATP = UDP-N-acetyl-alpha-D-muramoyl-L-alanyl-D-glutamate + ADP + phosphate + H(+). It participates in cell wall biogenesis; peptidoglycan biosynthesis. In terms of biological role, cell wall formation. Catalyzes the addition of glutamate to the nucleotide precursor UDP-N-acetylmuramoyl-L-alanine (UMA). The polypeptide is UDP-N-acetylmuramoylalanine--D-glutamate ligase (Leptospira interrogans serogroup Icterohaemorrhagiae serovar copenhageni (strain Fiocruz L1-130)).